The primary structure comprises 382 residues: S-adenosylmethionine synthase (382 aa).

His-15 contacts ATP. Asp-17 is a binding site for Mg(2+). Glu-43 contributes to the K(+) binding site. Residues Glu-56 and Gln-99 each coordinate L-methionine. The interval 99-109 (QSGDIAQGVDR) is flexible loop. ATP contacts are provided by residues 164–166 (DAK), 230–231 (KF), Asp-239, 245–246 (RK), Ala-262, and Lys-266. Asp-239 is an L-methionine binding site. Lys-270 is a binding site for L-methionine.

Belongs to the AdoMet synthase family. Homotetramer; dimer of dimers. The cofactor is Mg(2+). K(+) serves as cofactor.

It localises to the cytoplasm. It catalyses the reaction L-methionine + ATP + H2O = S-adenosyl-L-methionine + phosphate + diphosphate. It participates in amino-acid biosynthesis; S-adenosyl-L-methionine biosynthesis; S-adenosyl-L-methionine from L-methionine: step 1/1. In terms of biological role, catalyzes the formation of S-adenosylmethionine (AdoMet) from methionine and ATP. The overall synthetic reaction is composed of two sequential steps, AdoMet formation and the subsequent tripolyphosphate hydrolysis which occurs prior to release of AdoMet from the enzyme. This chain is S-adenosylmethionine synthase, found in Dichelobacter nodosus (strain VCS1703A).